Consider the following 207-residue polypeptide: Large ribosomal subunit protein bL25 (207 aa).

The protein belongs to the bacterial ribosomal protein bL25 family. CTC subfamily. In terms of assembly, part of the 50S ribosomal subunit; part of the 5S rRNA/L5/L18/L25 subcomplex. Contacts the 5S rRNA. Binds to the 5S rRNA independently of L5 and L18.

Functionally, this is one of the proteins that binds to the 5S RNA in the ribosome where it forms part of the central protuberance. The sequence is that of Large ribosomal subunit protein bL25 from Azorhizobium caulinodans (strain ATCC 43989 / DSM 5975 / JCM 20966 / LMG 6465 / NBRC 14845 / NCIMB 13405 / ORS 571).